A 542-amino-acid polypeptide reads, in one-letter code: Coiled-coil domain-containing protein 60 (542 aa).

Residues 70 to 97 (TMLQEETAFKKHQQHLKKLQEEELNKFQ) are a coiled coil. 2 disordered regions span residues 228 to 284 (ATRK…EEEV) and 334 to 358 (QTTHKSSERSSTTSGESHIQVTQKK). Composition is skewed to low complexity over residues 245 to 261 (SGGSSPQSSMMSVNPSS) and 342 to 351 (RSSTTSGESH).

The protein is Coiled-coil domain-containing protein 60 (Ccdc60) of Rattus norvegicus (Rat).